A 276-amino-acid polypeptide reads, in one-letter code: 3beta-hydroxysteroid dehydrogenase (276 aa).

NADP(+) is bound by residues 70 to 71, N97, Y162, and K166; that span reads DV. Y162 (proton acceptor) is an active-site residue.

The protein belongs to the short-chain dehydrogenases/reductases (SDR) family.

It catalyses the reaction 3-oxo-5beta-cholan-24-oate + NADPH + H(+) = isolithocholate + NADP(+). The enzyme catalyses 12alpha-hydroxy-3-oxo-5beta-cholan-24-oate + NADPH + H(+) = isodeoxycholate + NADP(+). The catalysed reaction is 12alpha-hydroxy-3-oxo-5beta-cholan-24-oate + NADH + H(+) = isodeoxycholate + NAD(+). It carries out the reaction 7alpha,12alpha-dihydroxy-3-oxo-5beta-cholan-24-oate + NADPH + H(+) = isocholate + NADP(+). It catalyses the reaction 3-oxochenodeoxycholate + NADPH + H(+) = isochenodeoxycholate + NADP(+). Functionally, involved in the modification of secondary bile acids into iso-bile acids (3beta-bile acids) via epimerization of the 3-OH group through a 3-oxo-intermediate. Catalyzes the reduction of 12-alpha-hydroxy-3-oxo-5-beta-cholan-24-oate (3-oxo-DCA) and 3-oxo-5-beta-cholan-24-oate (3-oxo-LCA) to yield isodeoxycholate (isoDCA) and isolithocholate (isoLCA), respectively. Is also able to catalyze the reduction of 3-dehydrocholate (3-oxo-CA or 7alpha,12alpha-dihydroxy-3-oxo-5beta-cholan-24-oate) and 7-alpha-hydroxy-3-oxo-5-beta-cholan-24-oate (3-oxo-CDCA), into isocholate (isoCA) and isochenodeoxycholate (isoCDCA), respectively. Accepts both NADPH and NADH as cosubstrates. The conversion of the abundant bile acid deoxycholate (DCA) into isoDCA by the gut bacterium R.gnavus favors the growth of the keystone commensal genus Bacteroides, since isoDCA is less cytotoxic than its parent compound, DCA; iso-bile acids have thus a potential role in modulating gut community composition. The protein is 3beta-hydroxysteroid dehydrogenase of Mediterraneibacter gnavus (strain ATCC 29149 / DSM 114966 / JCM 6515 / VPI C7-9) (Ruminococcus gnavus).